A 193-amino-acid chain; its full sequence is MQLLEERILTDGNILGENILKVDNFLTHQVDYRLMKAIGKVFAQKYAEAGITKVVTIEASGIAPAVYAAEAMDVPMIFAKKHKNITMTEGILTAEVYSFTKQVMSTVSIAGKFLSKEDKVLIIDDFLANGQAAKGLIEIIGQAGAQVVGVGIVIEKSFQDGRRLIEDMGIEVTSLARIKNFENGNLNFLEADA.

Residues Leu20 and Thr27 each coordinate xanthine. 128-132 (ANGQA) is a 5-phospho-alpha-D-ribose 1-diphosphate binding site. Xanthine is bound at residue Lys156.

Belongs to the purine/pyrimidine phosphoribosyltransferase family. Xpt subfamily. As to quaternary structure, homodimer.

The protein resides in the cytoplasm. It carries out the reaction XMP + diphosphate = xanthine + 5-phospho-alpha-D-ribose 1-diphosphate. Its pathway is purine metabolism; XMP biosynthesis via salvage pathway; XMP from xanthine: step 1/1. In terms of biological role, converts the preformed base xanthine, a product of nucleic acid breakdown, to xanthosine 5'-monophosphate (XMP), so it can be reused for RNA or DNA synthesis. This Streptococcus pyogenes serotype M5 (strain Manfredo) protein is Xanthine phosphoribosyltransferase.